A 316-amino-acid chain; its full sequence is DNA-directed RNA polymerase III subunit RPC6 (316 aa).

An N-acetylalanine modification is found at alanine 2. Residues lysine 5 and lysine 7 each participate in a glycyl lysine isopeptide (Lys-Gly) (interchain with G-Cter in SUMO2) cross-link. Residues cysteine 287, cysteine 290, cysteine 296, and cysteine 307 each coordinate [4Fe-4S] cluster.

The protein belongs to the eukaryotic RPC34/RPC39 RNA polymerase subunit family. As to quaternary structure, component of the RNA polymerase III complex consisting of 17 subunits: a ten-subunit horseshoe-shaped catalytic core composed of POLR3A/RPC1, POLR3B/RPC2, POLR1C/RPAC1, POLR1D/RPAC2, POLR3K/RPC10, POLR2E/RPABC1, POLR2F/RPABC2, POLR2H/RPABC3, POLR2K/RPABC4 and POLR2L/RPABC5; a mobile stalk composed of two subunits POLR3H/RPC8 and CRCP/RPC9, protruding from the core and functioning primarily in transcription initiation; and additional subunits homologous to general transcription factors of the RNA polymerase II machinery, POLR3C/RPC3-POLR3F/RPC6-POLR3G/RPC7 heterotrimer required for transcription initiation and POLR3D/RPC4-POLR3E/RPC5 heterodimer involved in both transcription initiation and termination. Directly interacts with POLR3C. Interacts with TBP and TFIIIB90 and GTF3C4. Interacts with MAF1. As part of the RNA polymerase III complex, interacts with PKP2.

The protein resides in the nucleus. Functionally, DNA-dependent RNA polymerase catalyzes the transcription of DNA into RNA using the four ribonucleoside triphosphates as substrates. Specific peripheric component of RNA polymerase III (Pol III) which synthesizes small non-coding RNAs including 5S rRNA, snRNAs, tRNAs and miRNAs from at least 500 distinct genomic loci. Part of POLR3C/RPC3-POLR3F/RPC6-POLR3G/RPC7 heterotrimer that coordinates the dynamics of Pol III stalk and clamp modules during the transition from apo to elongation state. Pol III plays a key role in sensing and limiting infection by intracellular bacteria and DNA viruses, including varicella zoster virus. Acts as a nuclear and cytosolic DNA sensor detecting AT-rich DNA, involved in innate immune response. Can sense non-self dsDNA that serves as template for transcription into dsRNA. The non-self RNA polymerase III transcripts, such as Epstein-Barr virus-encoded RNAs (EBERs) induce type I interferon and NF-kappa-B through the RIG-I pathway. Preferentially binds double-stranded DNA (dsDNA). This chain is DNA-directed RNA polymerase III subunit RPC6, found in Homo sapiens (Human).